The sequence spans 617 residues: V-type proton ATPase catalytic subunit A (617 aa).

257 to 264 is an ATP binding site; the sequence is GAFGCGKT.

It belongs to the ATPase alpha/beta chains family. As to quaternary structure, V-ATPase is a heteromultimeric enzyme composed of a peripheral catalytic V1 complex (components A to H) attached to an integral membrane V0 proton pore complex (components: a, c, c', c'', d, e, f and VOA1). Is a probable target for sumoylation.

It localises to the vacuole membrane. The enzyme catalyses ATP + H2O + 4 H(+)(in) = ADP + phosphate + 5 H(+)(out). Functionally, catalytic subunit of the V1 complex of vacuolar(H+)-ATPase (V-ATPase), a multisubunit enzyme composed of a peripheral complex (V1) that hydrolyzes ATP and a membrane integral complex (V0) that translocates protons. V-ATPase is responsible for acidifying and maintaining the pH of intracellular compartments. Mediates oxidative stress response, filamentous growth, and plays an important role in virulence. This Candida albicans (strain SC5314 / ATCC MYA-2876) (Yeast) protein is V-type proton ATPase catalytic subunit A.